The primary structure comprises 568 residues: Proline--tRNA ligase (568 aa).

Belongs to the class-II aminoacyl-tRNA synthetase family. ProS type 1 subfamily. As to quaternary structure, homodimer.

Its subcellular location is the cytoplasm. It catalyses the reaction tRNA(Pro) + L-proline + ATP = L-prolyl-tRNA(Pro) + AMP + diphosphate. Its function is as follows. Catalyzes the attachment of proline to tRNA(Pro) in a two-step reaction: proline is first activated by ATP to form Pro-AMP and then transferred to the acceptor end of tRNA(Pro). As ProRS can inadvertently accommodate and process non-cognate amino acids such as alanine and cysteine, to avoid such errors it has two additional distinct editing activities against alanine. One activity is designated as 'pretransfer' editing and involves the tRNA(Pro)-independent hydrolysis of activated Ala-AMP. The other activity is designated 'posttransfer' editing and involves deacylation of mischarged Ala-tRNA(Pro). The misacylated Cys-tRNA(Pro) is not edited by ProRS. The sequence is that of Proline--tRNA ligase from Listeria monocytogenes serovar 1/2a (strain ATCC BAA-679 / EGD-e).